The chain runs to 98 residues: NADH-ubiquinone oxidoreductase chain 4L (98 aa).

Transmembrane regions (helical) follow at residues 1-21 (MSPLHFSFYSAFTFSSLGLAF), 26-46 (LISALLCLESMMLSMFIPLSI), and 56-76 (FALVPILMLAFSACEAGTGLA).

It belongs to the complex I subunit 4L family. Core subunit of respiratory chain NADH dehydrogenase (Complex I) which is composed of 45 different subunits.

The protein localises to the mitochondrion inner membrane. It carries out the reaction a ubiquinone + NADH + 5 H(+)(in) = a ubiquinol + NAD(+) + 4 H(+)(out). Functionally, core subunit of the mitochondrial membrane respiratory chain NADH dehydrogenase (Complex I) which catalyzes electron transfer from NADH through the respiratory chain, using ubiquinone as an electron acceptor. Part of the enzyme membrane arm which is embedded in the lipid bilayer and involved in proton translocation. This chain is NADH-ubiquinone oxidoreductase chain 4L (MT-ND4L), found in Gallus gallus (Chicken).